Reading from the N-terminus, the 263-residue chain is uncharacterized protein (263 aa).

Position 13 to 20 (13 to 20 (TGSTSGIG)) interacts with NADP(+). Serine 141 is a binding site for substrate. Catalysis depends on tyrosine 154, which acts as the Proton acceptor.

It belongs to the short-chain dehydrogenases/reductases (SDR) family.

This is an uncharacterized protein from Bacillus subtilis (strain 168).